We begin with the raw amino-acid sequence, 618 residues long: Elongation factor 4 (618 aa).

Residues 17–198 (AIIRNFCIIA…KIVRDLPAPE (182 aa)) enclose the tr-type G domain. Residues 29-34 (DHGKST) and 145-148 (NKID) each bind GTP.

The protein belongs to the TRAFAC class translation factor GTPase superfamily. Classic translation factor GTPase family. LepA subfamily.

The protein resides in the cell membrane. It carries out the reaction GTP + H2O = GDP + phosphate + H(+). Functionally, required for accurate and efficient protein synthesis under certain stress conditions. May act as a fidelity factor of the translation reaction, by catalyzing a one-codon backward translocation of tRNAs on improperly translocated ribosomes. Back-translocation proceeds from a post-translocation (POST) complex to a pre-translocation (PRE) complex, thus giving elongation factor G a second chance to translocate the tRNAs correctly. Binds to ribosomes in a GTP-dependent manner. The polypeptide is Elongation factor 4 (Pseudarthrobacter chlorophenolicus (strain ATCC 700700 / DSM 12829 / CIP 107037 / JCM 12360 / KCTC 9906 / NCIMB 13794 / A6) (Arthrobacter chlorophenolicus)).